A 314-amino-acid polypeptide reads, in one-letter code: Olfactory receptor 1468 (314 aa).

Over 1-25 (MTEENQTVISQFLLLGLPIPSEHQH) the chain is Extracellular. The N-linked (GlcNAc...) asparagine glycan is linked to N5. Residues 26–49 (VFYALFLSMYLTTVLGNLIIIILI) form a helical membrane-spanning segment. Over 50 to 57 (HLDSHLHT) the chain is Cytoplasmic. The chain crosses the membrane as a helical span at residues 58-79 (PMYLFLSNLSFSDLCFSSVTMP). Topologically, residues 80 to 100 (KLLQNMQSQVPSIPFAGCLTQ) are extracellular. C97 and C189 form a disulfide bridge. A helical transmembrane segment spans residues 101–120 (LYFYLYFADLESFLLVAMAY). Residues 121–139 (DRYVAICFPLHYMSIMSPK) lie on the Cytoplasmic side of the membrane. Residues 140-158 (LCVSLVVLSWVLTTFHAML) traverse the membrane as a helical segment. Residues 159-196 (HTLLMARLSFCADNMIPHFFCDISPLLKLSCSDTHVNE) lie on the Extracellular side of the membrane. Residues 197–219 (LVIFVMGGLVIVIPFVLIIVSYA) form a helical membrane-spanning segment. Residues 220 to 236 (RVVASILKVPSVRGIHK) lie on the Cytoplasmic side of the membrane. A helical membrane pass occupies residues 237–260 (IFSTCGSHLSVVSLFYGTIIGLYL). Topologically, residues 261 to 272 (CPSANNSTVKET) are extracellular. Residues 273–292 (VMAMMYTVVTPMLNPFIYSL) form a helical membrane-spanning segment. Topologically, residues 293–314 (RNRDMKEALIRVLCKKKITFCL) are cytoplasmic.

It belongs to the G-protein coupled receptor 1 family. In terms of tissue distribution, olfactory epithelium.

The protein localises to the cell membrane. Functionally, odorant receptor. In Rattus norvegicus (Rat), this protein is Olfactory receptor 1468 (Olr1468).